The chain runs to 41 residues: Large ribosomal subunit protein bL36 (41 aa).

It belongs to the bacterial ribosomal protein bL36 family.

The polypeptide is Large ribosomal subunit protein bL36 (Mesorhizobium japonicum (strain LMG 29417 / CECT 9101 / MAFF 303099) (Mesorhizobium loti (strain MAFF 303099))).